Reading from the N-terminus, the 115-residue chain is Nucleoid-associated protein alr5067 (115 aa).

It belongs to the YbaB/EbfC family. Homodimer.

Its subcellular location is the cytoplasm. The protein resides in the nucleoid. Binds to DNA and alters its conformation. May be involved in regulation of gene expression, nucleoid organization and DNA protection. This is Nucleoid-associated protein alr5067 from Nostoc sp. (strain PCC 7120 / SAG 25.82 / UTEX 2576).